The following is a 249-amino-acid chain: Uridylate kinase (249 aa).

Lys23–Gly26 is a binding site for ATP. The tract at residues Gly31–Gly36 is involved in allosteric activation by GTP. Position 65 (Gly65) interacts with UMP. ATP contacts are provided by Gly66 and Arg70. UMP contacts are provided by residues Asp85 and Thr146–Thr153. 3 residues coordinate ATP: Thr173, Tyr179, and Asp182.

This sequence belongs to the UMP kinase family. Homohexamer.

The protein resides in the cytoplasm. It carries out the reaction UMP + ATP = UDP + ADP. Its pathway is pyrimidine metabolism; CTP biosynthesis via de novo pathway; UDP from UMP (UMPK route): step 1/1. With respect to regulation, allosterically activated by GTP. Inhibited by UTP. Catalyzes the reversible phosphorylation of UMP to UDP. The protein is Uridylate kinase of Jannaschia sp. (strain CCS1).